Here is a 369-residue protein sequence, read N- to C-terminus: Terpene cyclase DEP1 (369 aa).

8 consecutive transmembrane segments (helical) span residues 9 to 29 (FFYL…FNGM), 82 to 102 (LLFF…LIES), 118 to 138 (AMVL…LYLV), 157 to 177 (ALLV…VPAW), 190 to 210 (IALF…LASI), 234 to 254 (LVLA…GALI), 298 to 318 (LFSQ…SHLL), and 342 to 362 (LVYL…SFAL).

It belongs to the membrane-bound ascI terpene cyclase family.

Its subcellular location is the membrane. It functions in the pathway polyketide biosynthesis. In terms of biological role, part of the gene cluster that mediates the biosynthesis of depudecin, a highly oxidized eleven-carbon linear polyketide that acts as a histone deacetylase (HDAC) inhibitor and makes a small contribution to pathogenesis. The reducing polyketide synthase DEP5 is the central enzyme in depudecin biosynthesis by yielding the backbone polyketide chain. The monooxygenases DEP2 and DEP4, as well as the uncharacterized protein DEP1, then act as tailoring enzymes to modify the intermediate polyketide chain into depudecin. The protein is Terpene cyclase DEP1 of Alternaria brassicicola (Dark leaf spot agent).